Consider the following 104-residue polypeptide: Large ribosomal subunit protein uL24 (104 aa).

Belongs to the universal ribosomal protein uL24 family. Part of the 50S ribosomal subunit.

Functionally, one of two assembly initiator proteins, it binds directly to the 5'-end of the 23S rRNA, where it nucleates assembly of the 50S subunit. In terms of biological role, one of the proteins that surrounds the polypeptide exit tunnel on the outside of the subunit. The protein is Large ribosomal subunit protein uL24 of Idiomarina loihiensis (strain ATCC BAA-735 / DSM 15497 / L2-TR).